We begin with the raw amino-acid sequence, 306 residues long: uncharacterized protein (306 aa).

9 consecutive transmembrane segments (helical) span residues 13–33, 53–73, 86–106, 112–132, 147–167, 177–197, 214–234, 246–268, and 272–294; these read VLLS…FAFI, PLPM…FAWG, ITGL…IWAA, VGLT…IVPL, WGMM…GMLF, AFVS…VIAI, AGIA…AWLI, VSLI…VTFF, and VAVP…GYML.

It is found in the cell membrane. This is an uncharacterized protein from Bacillus subtilis (strain 168).